Reading from the N-terminus, the 404-residue chain is High affinity immunoglobulin gamma Fc receptor I (404 aa).

Positions 1-24 (MILTSFGDDMWLLTTLLLWVPVGG) are cleaved as a signal peptide. Residues 25-297 (EVVNATKAVI…QVLGPQSSAP (273 aa)) lie on the Extracellular side of the membrane. Residues Asn-28, Asn-48, Asn-69, Asn-168, and Asn-249 are each glycosylated (N-linked (GlcNAc...) asparagine). Ig-like C2-type domains are found at residues 32-111 (AVIT…LQIH), 117-194 (LQAS…SITV), and 201-286 (PVLR…PELE). Cystine bridges form between Cys-53–Cys-95, Cys-134–Cys-177, and Cys-221–Cys-269. Residues 298–320 (VWFHILFYLSVGIMFSLNTVLYV) traverse the membrane as a helical segment. The interaction with EPB41L2 stretch occupies residues 321 to 342 (KIHRLQREKKYNLEVPLVSEQG). The Cytoplasmic segment spans residues 321–404 (KIHRLQREKK…DSTGAQTSQS (84 aa)). The segment at 346-404 (NSFQQVRSDGVYEEVTATASQTTPKEAPDGPRSSVGDCGPEQPEPLPPSDSTGAQTSQS) is disordered. Phosphoserine is present on Ser-347. Phosphothreonine is present on Thr-368. A compositionally biased stretch (polar residues) spans 394 to 404 (SDSTGAQTSQS).

Belongs to the immunoglobulin superfamily. FCGR1 family. As to quaternary structure, interacts with FCERG1; forms a functional signaling complex. Interacts with FLNA; prevents FCGR1A degradation. Interacts with EPB41L2, LAT and PPL. Interacts with HCK and LYN. In terms of processing, N-glycosylated. Post-translationally, phosphorylated on serine residues. In terms of tissue distribution, macrophage-specific.

It localises to the cell membrane. Functionally, high affinity receptor for the Fc region of immunoglobulins gamma. Functions in both innate and adaptive immune responses. This Mus musculus (Mouse) protein is High affinity immunoglobulin gamma Fc receptor I (Fcgr1).